Consider the following 36-residue polypeptide: Photosystem I reaction center subunit VIII (36 aa).

Residues 9 to 29 form a helical membrane-spanning segment; the sequence is ILTPVVTLVFPGLMFALFFVL.

The protein belongs to the PsaI family.

It is found in the plastid. The protein resides in the chloroplast thylakoid membrane. In terms of biological role, may help in the organization of the PsaL subunit. This Emiliania huxleyi (Coccolithophore) protein is Photosystem I reaction center subunit VIII.